The chain runs to 689 residues: Glycine--tRNA ligase beta subunit (689 aa).

Belongs to the class-II aminoacyl-tRNA synthetase family. In terms of assembly, tetramer of two alpha and two beta subunits.

It is found in the cytoplasm. The enzyme catalyses tRNA(Gly) + glycine + ATP = glycyl-tRNA(Gly) + AMP + diphosphate. The chain is Glycine--tRNA ligase beta subunit from Sodalis glossinidius (strain morsitans).